We begin with the raw amino-acid sequence, 206 residues long: Ion-translocating oxidoreductase complex subunit G (206 aa).

The chain crosses the membrane as a helical span at residues 9–29 (GITLALFAAGSTGLTAAINQM). Thr174 is modified (FMN phosphoryl threonine).

This sequence belongs to the RnfG family. As to quaternary structure, the complex is composed of six subunits: RsxA, RsxB, RsxC, RsxD, RsxE and RsxG. FMN serves as cofactor.

It localises to the cell inner membrane. Part of a membrane-bound complex that couples electron transfer with translocation of ions across the membrane. Required to maintain the reduced state of SoxR. The protein is Ion-translocating oxidoreductase complex subunit G of Escherichia coli O157:H7.